A 427-amino-acid polypeptide reads, in one-letter code: MDFQLYSLGAALVFHEIFFPESSTAMALILAMGTYGAGYVARIVGAFIFGKMGDRIGRKKVLFITITMMGICTTLIGVLPTYAQIGVFAPILLVTLRIIQGLGAGAEISGAGTMLAEYAPKGKRGIISSFVAMGTNCGTLSATAIWAFMFFILSKEELLAWGWRIPFLASVVVMVFAIWLRMNLKESPVFEKVNDSNQPTAKPAPAGSMFQSKSFWLATGLRFGQAGNSGLIQTFLAGYLVQTLLFNKAIPTDALMISSILGFMTIPFLGWLSDKIGRRIPYIIMNTSAIVLAWPMLSIIVDKSYAPSTIMVALIVIHNCAVLGLFALENITMAEMFGCKNRFTRMAISKEIGGLIASGFGPILAGIFCTMTESWYPIAIMIMAYSVIGLISALKMPEVKDRDLSALEDAAEDQPRVVRAAQPSRSL.

At 1–7 the chain is on the cytoplasmic side; it reads MDFQLYS. 2 helical membrane passes run 8–28 and 29–49; these read LGAALVFHEIFFPESSTAMAL and ILAMGTYGAGYVARIVGAFIF. At 50–74 the chain is on the cytoplasmic side; that stretch reads GKMGDRIGRKKVLFITITMMGICTT. A helical membrane pass occupies residues 75 to 95; sequence LIGVLPTYAQIGVFAPILLVT. The Periplasmic segment spans residues 96–97; the sequence is LR. Residues 98–118 traverse the membrane as a helical segment; the sequence is IIQGLGAGAEISGAGTMLAEY. Residues 119–132 are Cytoplasmic-facing; that stretch reads APKGKRGIISSFVA. Residues 133–153 traverse the membrane as a helical segment; that stretch reads MGTNCGTLSATAIWAFMFFIL. Residues 154 to 157 are Periplasmic-facing; that stretch reads SKEE. A helical membrane pass occupies residues 158–178; the sequence is LLAWGWRIPFLASVVVMVFAI. The Cytoplasmic portion of the chain corresponds to 179–225; that stretch reads WLRMNLKESPVFEKVNDSNQPTAKPAPAGSMFQSKSFWLATGLRFGQ. A helical transmembrane segment spans residues 226-246; sequence AGNSGLIQTFLAGYLVQTLLF. The Periplasmic portion of the chain corresponds to 247-251; the sequence is NKAIP. Residues 252–272 form a helical membrane-spanning segment; sequence TDALMISSILGFMTIPFLGWL. The Cytoplasmic portion of the chain corresponds to 273–279; that stretch reads SDKIGRR. Residues 280–300 traverse the membrane as a helical segment; sequence IPYIIMNTSAIVLAWPMLSII. Residues 301 to 307 are Periplasmic-facing; sequence VDKSYAP. The chain crosses the membrane as a helical span at residues 308-328; the sequence is STIMVALIVIHNCAVLGLFAL. Residues 329 to 351 lie on the Cytoplasmic side of the membrane; it reads ENITMAEMFGCKNRFTRMAISKE. Residues 352–372 traverse the membrane as a helical segment; the sequence is IGGLIASGFGPILAGIFCTMT. Glu-373 is a topological domain (periplasmic). The chain crosses the membrane as a helical span at residues 374 to 394; it reads SWYPIAIMIMAYSVIGLISAL. Residues 395–427 are Cytoplasmic-facing; the sequence is KMPEVKDRDLSALEDAAEDQPRVVRAAQPSRSL.

Belongs to the major facilitator superfamily. Metabolite:H+ Symporter (MHS) family (TC 2.A.1.6) family.

It is found in the cell inner membrane. In terms of biological role, when overexpressed in human HEK-293 cells forms an inward rectifying potassium channel. This Escherichia coli (strain K12) protein is Putative transporter YdfJ (ydfJ).